A 121-amino-acid polypeptide reads, in one-letter code: Large ribosomal subunit protein bL12 (121 aa).

The protein belongs to the bacterial ribosomal protein bL12 family. In terms of assembly, homodimer. Part of the ribosomal stalk of the 50S ribosomal subunit. Forms a multimeric L10(L12)X complex, where L10 forms an elongated spine to which 2 to 4 L12 dimers bind in a sequential fashion. Binds GTP-bound translation factors.

Functionally, forms part of the ribosomal stalk which helps the ribosome interact with GTP-bound translation factors. Is thus essential for accurate translation. This chain is Large ribosomal subunit protein bL12, found in Leuconostoc mesenteroides subsp. mesenteroides (strain ATCC 8293 / DSM 20343 / BCRC 11652 / CCM 1803 / JCM 6124 / NCDO 523 / NBRC 100496 / NCIMB 8023 / NCTC 12954 / NRRL B-1118 / 37Y).